We begin with the raw amino-acid sequence, 344 residues long: Phosphate acyltransferase (344 aa).

Belongs to the PlsX family. As to quaternary structure, homodimer. Probably interacts with PlsY.

Its subcellular location is the cytoplasm. It carries out the reaction a fatty acyl-[ACP] + phosphate = an acyl phosphate + holo-[ACP]. It participates in lipid metabolism; phospholipid metabolism. Its function is as follows. Catalyzes the reversible formation of acyl-phosphate (acyl-PO(4)) from acyl-[acyl-carrier-protein] (acyl-ACP). This enzyme utilizes acyl-ACP as fatty acyl donor, but not acyl-CoA. The protein is Phosphate acyltransferase of Sodalis glossinidius (strain morsitans).